The following is a 475-amino-acid chain: Ribulose bisphosphate carboxylase large chain (475 aa).

The propeptide occupies 1-2; that stretch reads MS. Proline 3 is modified (N-acetylproline). Lysine 14 bears the N6,N6,N6-trimethyllysine mark. Positions 123 and 173 each coordinate substrate. Catalysis depends on lysine 175, which acts as the Proton acceptor. Lysine 177 serves as a coordination point for substrate. Residues lysine 201, aspartate 203, and glutamate 204 each contribute to the Mg(2+) site. At lysine 201 the chain carries N6-carboxylysine. The Proton acceptor role is filled by histidine 294. 3 residues coordinate substrate: arginine 295, histidine 327, and serine 379.

Belongs to the RuBisCO large chain family. Type I subfamily. Heterohexadecamer of 8 large chains and 8 small chains; disulfide-linked. The disulfide link is formed within the large subunit homodimers. It depends on Mg(2+) as a cofactor. In terms of processing, the disulfide bond which can form in the large chain dimeric partners within the hexadecamer appears to be associated with oxidative stress and protein turnover.

The protein resides in the plastid. It is found in the chloroplast. The catalysed reaction is 2 (2R)-3-phosphoglycerate + 2 H(+) = D-ribulose 1,5-bisphosphate + CO2 + H2O. The enzyme catalyses D-ribulose 1,5-bisphosphate + O2 = 2-phosphoglycolate + (2R)-3-phosphoglycerate + 2 H(+). RuBisCO catalyzes two reactions: the carboxylation of D-ribulose 1,5-bisphosphate, the primary event in carbon dioxide fixation, as well as the oxidative fragmentation of the pentose substrate in the photorespiration process. Both reactions occur simultaneously and in competition at the same active site. This is Ribulose bisphosphate carboxylase large chain from Stellaria media (Common chickweed).